The following is a 149-amino-acid chain: Arginine repressor (149 aa).

It belongs to the ArgR family.

The protein localises to the cytoplasm. The protein operates within amino-acid biosynthesis; L-arginine biosynthesis [regulation]. Regulates arginine biosynthesis genes. This Listeria monocytogenes serotype 4b (strain F2365) protein is Arginine repressor.